A 446-amino-acid polypeptide reads, in one-letter code: Plant intracellular Ras-group-related LRR protein 3 (446 aa).

The stretch at 65 to 100 (EACRAVVRLEETHDAYEALLQEAEGRLEAVYRSAME) forms a coiled coil. Positions 101-121 (GKDLEEPDGRDESAAAAAGDD) are disordered. LRR repeat units lie at residues 138–160 (GKPV…AFGR), 161–184 (IQGL…IGGL), 185–207 (DHLE…IGLL), 208–230 (LNLR…ISKC), 232–254 (SLIE…GYEL), 255–277 (VNLR…ICEM), 279–300 (SLYL…IGKL), 301–324 (SSLE…SFGD), 325–347 (LLNL…NFGR), and 349–371 (DKLE…IVNK). A GVYW motif is present at residues 372–384 (GVDAVKEYMLQRW).

Belongs to the SHOC2 family. As to expression, widely expressed.

Its function is as follows. Leucine-rich repeat protein that likely mediates protein interactions, possibly in the context of signal transduction. The protein is Plant intracellular Ras-group-related LRR protein 3 (IRL3) of Oryza sativa subsp. japonica (Rice).